The following is a 225-amino-acid chain: Cytidylate kinase (225 aa).

11 to 19 (GPAAAGKST) contributes to the ATP binding site.

Belongs to the cytidylate kinase family. Type 1 subfamily.

It localises to the cytoplasm. The catalysed reaction is CMP + ATP = CDP + ADP. It carries out the reaction dCMP + ATP = dCDP + ADP. The protein is Cytidylate kinase of Bacillus anthracis (strain A0248).